Reading from the N-terminus, the 695-residue chain is Spermidine/spermine N(1)-acetyltransferase-like protein 1 (695 aa).

Composition is skewed to polar residues over residues Met-1–Ala-39, Pro-52–Asp-68, and Asp-78–Val-98. Disordered regions lie at residues Met-1 to Met-274, Asp-290 to Trp-332, Ala-344 to Gly-375, and Arg-387 to Gln-493. Low complexity predominate over residues Ser-105 to Ser-122. Polar residues-rich tracts occupy residues Arg-123–Ser-179, Gly-197–Pro-208, Pro-231–Pro-266, Pro-294–Asp-310, Ala-355–Gly-375, Ser-389–Ser-422, and Pro-459–Met-471. The 167-residue stretch at Phe-529–Glu-695 folds into the N-acetyltransferase domain. Position 552 to 553 (Cys-552 to Glu-553) interacts with substrate. Acetyl-CoA contacts are provided by residues Phe-618–Val-620 and Gly-626–Ala-631. Residues His-650–Leu-652 and Glu-676 contribute to the substrate site.

The protein belongs to the acetyltransferase family.

This chain is Spermidine/spermine N(1)-acetyltransferase-like protein 1 (SATL1), found in Homo sapiens (Human).